Reading from the N-terminus, the 338-residue chain is Malate dehydrogenase, mitochondrial (338 aa).

The N-terminal 24 residues, 1-24, are a transit peptide targeting the mitochondrion; that stretch reads MLSALARPASAALRRSFSTSAQNN. Residues 31-37 and Asp57 contribute to the NAD(+) site; that span reads GASGGIG. O-linked (GlcNAc) serine glycosylation is present at Ser33. Lys78 and Lys91 each carry N6-acetyllysine; alternate. N6-succinyllysine; alternate is present on residues Lys78 and Lys91. Arg104 and Arg110 together coordinate substrate. NAD(+)-binding positions include Asn117 and 140–142; that span reads IAN. Substrate is bound at residue Asn142. An N6-acetyllysine modification is found at Lys165. A substrate-binding site is contributed by Arg176. Lys185 carries the N6-acetyllysine; alternate modification. N6-succinyllysine; alternate is present on Lys185. Residue His200 is the Proton acceptor of the active site. Lys203 carries the N6-succinyllysine modification. Lys215 and Lys239 each carry N6-acetyllysine; alternate. Residues Lys215 and Lys239 each carry the N6-succinyllysine; alternate modification. The residue at position 239 (Lys239) is an N6-malonyllysine; alternate. Residue Ser246 is modified to Phosphoserine. An NAD(+)-binding site is contributed by Met251. An N6-succinyllysine modification is found at Lys269. 4 positions are modified to N6-acetyllysine; alternate: Lys296, Lys301, Lys314, and Lys324. An N6-succinyllysine; alternate mark is found at Lys296, Lys301, Lys314, and Lys324. Ser326 carries the post-translational modification Phosphoserine. Lys328, Lys329, and Lys335 each carry N6-acetyllysine; alternate. Residue Lys328 is modified to N6-succinyllysine; alternate. Lys329 is subject to N6-malonyllysine; alternate. Lys335 is subject to N6-succinyllysine; alternate.

This sequence belongs to the LDH/MDH superfamily. MDH type 1 family. As to quaternary structure, homodimer. Post-translationally, acetylation is enhanced after treatment either with trichostin A (TCA) or with nicotinamide (NAM) with the appearance of tri- and tetraacetylations. Glucose also increases acetylation.

It is found in the mitochondrion matrix. It catalyses the reaction (S)-malate + NAD(+) = oxaloacetate + NADH + H(+). Its activity is regulated as follows. Enzyme activity is enhanced by acetylation. The polypeptide is Malate dehydrogenase, mitochondrial (MDH2) (Macaca fascicularis (Crab-eating macaque)).